We begin with the raw amino-acid sequence, 191 residues long: NAD(P)H-quinone oxidoreductase subunit L, chloroplastic (191 aa).

Residues 1-46 (MSRCGSLGLYAPNALPSLSLKPRSVKSPFCITSHTKPNDTLLHNVN) constitute a chloroplast transit peptide. 3 helical membrane passes run 61–81 (TILA…ALAI), 93–113 (VVLD…PIIM), and 129–149 (YLQF…APFL).

This sequence belongs to the NDH complex subunit L family. In terms of assembly, part of the chloroplast NDH complex, composed of a mixture of chloroplast and nucleus encoded subunits. Component of the NDH subcomplex A, at least composed of ndhH, ndhI, ndhJ, ndhK, ndhL, ndhM, ndhN and ndhO.

It is found in the plastid. Its subcellular location is the chloroplast thylakoid membrane. The enzyme catalyses a plastoquinone + NADH + (n+1) H(+)(in) = a plastoquinol + NAD(+) + n H(+)(out). The catalysed reaction is a plastoquinone + NADPH + (n+1) H(+)(in) = a plastoquinol + NADP(+) + n H(+)(out). Functionally, NDH shuttles electrons from NAD(P)H:plastoquinone, via FMN and iron-sulfur (Fe-S) centers, to quinones in the photosynthetic chain and possibly in a chloroplast respiratory chain. The immediate electron acceptor for the enzyme in this species is believed to be plastoquinone. Couples the redox reaction to proton translocation, and thus conserves the redox energy in a proton gradient. The chain is NAD(P)H-quinone oxidoreductase subunit L, chloroplastic from Arabidopsis thaliana (Mouse-ear cress).